Here is a 502-residue protein sequence, read N- to C-terminus: Cyanidin 3-O-glucoside 5-O-glucosyltransferase (acyl-glucose) (502 aa).

Positions 1–30 (MNMSCKFEIVLLVSWWLLLVLVFGVESSMF) are cleaved as a signal peptide. N2 is a glycosylation site (N-linked (GlcNAc...) asparagine). A beta-D-glucoside is bound by residues Q52, H150, and 196-197 (NE). Catalysis depends on E197, which acts as the Proton donor. An N-linked (GlcNAc...) asparagine glycan is attached at N303. Residues Y320 and E388 each contribute to the a beta-D-glucoside site. The active-site Nucleophile is E388. A glycan (N-linked (GlcNAc...) asparagine) is linked at N425. Residues W435 and F451 each contribute to the a beta-D-glucoside site.

Belongs to the glycosyl hydrolase 1 family. Expressed in petals.

It localises to the vacuole. The catalysed reaction is cyanidin 3-O-beta-D-glucoside + 1-O-(trans-sinapoyl)-beta-D-glucose = cyanidin 3,5-di-O-beta-D-glucoside + (E)-sinapate. It functions in the pathway pigment biosynthesis; anthocyanin biosynthesis. Beta-glycosidase that catalyzes the transfer of glucose moiety to anthocyanidin 3-glucoside at the 5 position. Anthocyanins are ubiquitous colored pigments that are responsible for variations in petal color. Uses acyl-glucoses, but not UDP-glucose, as the glucose donor. This Dianthus caryophyllus (Carnation) protein is Cyanidin 3-O-glucoside 5-O-glucosyltransferase (acyl-glucose) (AA5GT).